Consider the following 365-residue polypeptide: DNA replication and repair protein RecF (365 aa).

Residue 23-30 (GPNGIGKS) coordinates ATP.

Belongs to the RecF family.

It is found in the cytoplasm. Its function is as follows. The RecF protein is involved in DNA metabolism; it is required for DNA replication and normal SOS inducibility. RecF binds preferentially to single-stranded, linear DNA. It also seems to bind ATP. The polypeptide is DNA replication and repair protein RecF (Parasynechococcus marenigrum (strain WH8102)).